Here is a 350-residue protein sequence, read N- to C-terminus: Serine-threonine kinase receptor-associated protein (350 aa).

7 WD repeats span residues 12–56 (GHTR…GTFL), 57–96 (GHKG…ELIT), 98–137 (AHKH…AEPD), 141–179 (GHTS…EVKA), 180–212 (LNVA…HSAE), 221–262 (EAPA…ESYK), and 263–302 (GHFG…TYGL). The disordered stretch occupies residues 311–350 (ENAEAAKARTTLPGTAEEEIEEVASENSDSVYSSTPEVKA). Residues 335–350 (SENSDSVYSSTPEVKA) are compositionally biased toward polar residues.

This sequence belongs to the WD repeat STRAP family. In terms of assembly, part of the core SMN complex.

It localises to the cytoplasm. The protein resides in the nucleus. Its function is as follows. The SMN complex catalyzes the assembly of small nuclear ribonucleoproteins (snRNPs), the building blocks of the spliceosome, and thereby plays an important role in the splicing of cellular pre-mRNAs. Most spliceosomal snRNPs contain a common set of Sm proteins SNRPB, SNRPD1, SNRPD2, SNRPD3, SNRPE, SNRPF and SNRPG that assemble in a heptameric protein ring on the Sm site of the small nuclear RNA to form the core snRNP (Sm core). In the cytosol, the Sm proteins SNRPD1, SNRPD2, SNRPE, SNRPF and SNRPG are trapped in an inactive 6S pICln-Sm complex by the chaperone CLNS1A that controls the assembly of the core snRNP. To assemble core snRNPs, the SMN complex accepts the trapped 5Sm proteins from CLNS1A forming an intermediate. Binding of snRNA inside 5Sm triggers eviction of the SMN complex, thereby allowing binding of SNRPD3 and SNRPB to complete assembly of the core snRNP. STRAP plays a role in the cellular distribution of the SMN complex. This is Serine-threonine kinase receptor-associated protein (STRAP) from Gallus gallus (Chicken).